The primary structure comprises 187 residues: GTP cyclohydrolase 1 (187 aa).

Zn(2+)-binding residues include Cys76, His79, and Cys148.

The protein belongs to the GTP cyclohydrolase I family. Toroid-shaped homodecamer, composed of two pentamers of five dimers.

It carries out the reaction GTP + H2O = 7,8-dihydroneopterin 3'-triphosphate + formate + H(+). It participates in cofactor biosynthesis; 7,8-dihydroneopterin triphosphate biosynthesis; 7,8-dihydroneopterin triphosphate from GTP: step 1/1. In Streptococcus suis (strain 98HAH33), this protein is GTP cyclohydrolase 1.